The primary structure comprises 510 residues: ATP synthase subunit alpha, chloroplastic (510 aa).

170–177 (GDRQTGKT) lines the ATP pocket.

Belongs to the ATPase alpha/beta chains family. As to quaternary structure, F-type ATPases have 2 components, CF(1) - the catalytic core - and CF(0) - the membrane proton channel. CF(1) has five subunits: alpha(3), beta(3), gamma(1), delta(1), epsilon(1). CF(0) has four main subunits: a, b, b' and c.

The protein localises to the plastid. The protein resides in the chloroplast thylakoid membrane. It catalyses the reaction ATP + H2O + 4 H(+)(in) = ADP + phosphate + 5 H(+)(out). Functionally, produces ATP from ADP in the presence of a proton gradient across the membrane. The alpha chain is a regulatory subunit. In Lotus japonicus (Lotus corniculatus var. japonicus), this protein is ATP synthase subunit alpha, chloroplastic.